The following is a 178-amino-acid chain: ATP-dependent protease subunit HslV (178 aa).

Residue T7 is part of the active site. Positions 162, 165, and 168 each coordinate Na(+).

Belongs to the peptidase T1B family. HslV subfamily. As to quaternary structure, a double ring-shaped homohexamer of HslV is capped on each side by a ring-shaped HslU homohexamer. The assembly of the HslU/HslV complex is dependent on binding of ATP.

The protein resides in the cytoplasm. The catalysed reaction is ATP-dependent cleavage of peptide bonds with broad specificity.. With respect to regulation, allosterically activated by HslU binding. In terms of biological role, protease subunit of a proteasome-like degradation complex believed to be a general protein degrading machinery. The sequence is that of ATP-dependent protease subunit HslV from Cupriavidus pinatubonensis (strain JMP 134 / LMG 1197) (Cupriavidus necator (strain JMP 134)).